The chain runs to 208 residues: Probable GTP-binding protein EngB (208 aa).

The EngB-type G domain occupies 18–187 (KQFEICVIGR…FALMKKVVIQ (170 aa)). Residues 26-33 (GRSNVGKS), 52-56 (GRTQL), 69-72 (DLPG), 135-138 (NKLD), and 166-168 (VSA) each bind GTP. Positions 33 and 54 each coordinate Mg(2+).

It belongs to the TRAFAC class TrmE-Era-EngA-EngB-Septin-like GTPase superfamily. EngB GTPase family. Mg(2+) is required as a cofactor.

Necessary for normal cell division and for the maintenance of normal septation. The protein is Probable GTP-binding protein EngB of Ureaplasma parvum serovar 3 (strain ATCC 27815 / 27 / NCTC 11736).